The sequence spans 272 residues: Phosphatidylglycerol--prolipoprotein diacylglyceryl transferase (272 aa).

4 consecutive transmembrane segments (helical) span residues 16–36 (VGLH…LSSF), 62–82 (FALG…VLFY), 97–117 (IWKG…WAAV), and 129–149 (LSVT…ALLI). R150 provides a ligand contact to a 1,2-diacyl-sn-glycero-3-phospho-(1'-sn-glycerol). 2 helical membrane-spanning segments follow: residues 206-226 (GVIR…VAVI) and 246-266 (ILTI…GIIW).

This sequence belongs to the Lgt family.

Its subcellular location is the cell inner membrane. It catalyses the reaction L-cysteinyl-[prolipoprotein] + a 1,2-diacyl-sn-glycero-3-phospho-(1'-sn-glycerol) = an S-1,2-diacyl-sn-glyceryl-L-cysteinyl-[prolipoprotein] + sn-glycerol 1-phosphate + H(+). Its pathway is protein modification; lipoprotein biosynthesis (diacylglyceryl transfer). In terms of biological role, catalyzes the transfer of the diacylglyceryl group from phosphatidylglycerol to the sulfhydryl group of the N-terminal cysteine of a prolipoprotein, the first step in the formation of mature lipoproteins. The protein is Phosphatidylglycerol--prolipoprotein diacylglyceryl transferase of Chlamydia trachomatis serovar D (strain ATCC VR-885 / DSM 19411 / UW-3/Cx).